A 71-amino-acid polypeptide reads, in one-letter code: UPF0435 protein SE_1565 (71 aa).

The protein belongs to the UPF0435 family.

This chain is UPF0435 protein SE_1565, found in Staphylococcus epidermidis (strain ATCC 12228 / FDA PCI 1200).